Consider the following 299-residue polypeptide: Taste receptor type 2 member 1 (299 aa).

The Extracellular portion of the chain corresponds to 1-9 (MLESHLIIY). A helical transmembrane segment spans residues 10–30 (FLLAVIQFLLGIFTNGIIVVV). At 31–55 (NGIDLIKHRKMAPLDLLLSCLAVSR) the chain is on the cytoplasmic side. Residues 56 to 76 (IFLQLFIFYVNVIVIFFIEFI) form a helical membrane-spanning segment. Topologically, residues 77–81 (MCSAN) are extracellular. Residues 82-102 (CAILLFVNELELWLATWLGVF) form a helical membrane-spanning segment. The Cytoplasmic segment spans residues 103–124 (YCAKVASVRHPLFIWLKMRISK). The chain crosses the membrane as a helical span at residues 125-145 (LVPWMILGSLLYVSMICVFHS). At 146–178 (KYAGFMVPHFLRNFFSQNATIQKEDTLAIQIFS) the chain is on the extracellular side. N-linked (GlcNAc...) asparagine glycosylation is present at Asn-163. A helical membrane pass occupies residues 179–199 (FVAEFSVPLLIFLVAVLLLIF). Residues 200-222 (SLGRHTRQMRNTVAGSRVPGRGA) lie on the Cytoplasmic side of the membrane. A helical membrane pass occupies residues 223–243 (PISALLSILSFLILYFSHCMI). Residues 244–257 (KVFLSSLKFHVRRF) lie on the Extracellular side of the membrane. A helical membrane pass occupies residues 258 to 278 (IFLFFILVIGIYPSGHSLILI). Residues 279-299 (LGNPKLKQNAKKFLLHSKCCQ) are Cytoplasmic-facing.

Belongs to the G-protein coupled receptor T2R family.

It localises to the membrane. Functionally, receptor that may play a role in the perception of bitterness and is gustducin-linked. May play a role in sensing the chemical composition of the gastrointestinal content. The activity of this receptor may stimulate alpha gustducin, mediate PLC-beta-2 activation and lead to the gating of TRPM5. The sequence is that of Taste receptor type 2 member 1 (TAS2R1) from Pan paniscus (Pygmy chimpanzee).